The sequence spans 222 residues: Octanoyltransferase (222 aa).

The BPL/LPL catalytic domain maps to 34–214 (GEAPSTVLLL…EFRKHEEALV (181 aa)). Residues 72–79 (RGGKLTWH), 144–146 (AIG), and 157–159 (GVA) contribute to the substrate site. Residue Cys-175 is the Acyl-thioester intermediate of the active site.

The protein belongs to the LipB family.

It is found in the cytoplasm. The catalysed reaction is octanoyl-[ACP] + L-lysyl-[protein] = N(6)-octanoyl-L-lysyl-[protein] + holo-[ACP] + H(+). It functions in the pathway protein modification; protein lipoylation via endogenous pathway; protein N(6)-(lipoyl)lysine from octanoyl-[acyl-carrier-protein]: step 1/2. In terms of biological role, catalyzes the transfer of endogenously produced octanoic acid from octanoyl-acyl-carrier-protein onto the lipoyl domains of lipoate-dependent enzymes. Lipoyl-ACP can also act as a substrate although octanoyl-ACP is likely to be the physiological substrate. In Pseudarthrobacter chlorophenolicus (strain ATCC 700700 / DSM 12829 / CIP 107037 / JCM 12360 / KCTC 9906 / NCIMB 13794 / A6) (Arthrobacter chlorophenolicus), this protein is Octanoyltransferase.